Reading from the N-terminus, the 423-residue chain is CinA-like protein (423 aa).

It belongs to the CinA family.

The protein is CinA-like protein of Chlorobium phaeobacteroides (strain DSM 266 / SMG 266 / 2430).